Here is a 267-residue protein sequence, read N- to C-terminus: 4-hydroxy-tetrahydrodipicolinate reductase (267 aa).

Residues 8–13 (GAGGRM) and E34 contribute to the NAD(+) site. R35 is an NADP(+) binding site. NAD(+) is bound by residues 98–100 (GTT) and 122–125 (APNM). Residue H155 is the Proton donor/acceptor of the active site. H156 contributes to the (S)-2,3,4,5-tetrahydrodipicolinate binding site. K159 acts as the Proton donor in catalysis. 165–166 (GT) is a binding site for (S)-2,3,4,5-tetrahydrodipicolinate.

The protein belongs to the DapB family.

It is found in the cytoplasm. The catalysed reaction is (S)-2,3,4,5-tetrahydrodipicolinate + NAD(+) + H2O = (2S,4S)-4-hydroxy-2,3,4,5-tetrahydrodipicolinate + NADH + H(+). It carries out the reaction (S)-2,3,4,5-tetrahydrodipicolinate + NADP(+) + H2O = (2S,4S)-4-hydroxy-2,3,4,5-tetrahydrodipicolinate + NADPH + H(+). The protein operates within amino-acid biosynthesis; L-lysine biosynthesis via DAP pathway; (S)-tetrahydrodipicolinate from L-aspartate: step 4/4. In terms of biological role, catalyzes the conversion of 4-hydroxy-tetrahydrodipicolinate (HTPA) to tetrahydrodipicolinate. The sequence is that of 4-hydroxy-tetrahydrodipicolinate reductase from Thioalkalivibrio sulfidiphilus (strain HL-EbGR7).